A 102-amino-acid chain; its full sequence is MTGSDLIAMMILAAGLFAIGLFGVLARRGIMFQLVALEVALSGPALGFVAAGAYHADPQGQGMFILVLTLAAAEVAVGLALFLRIRRIAGSDDSDVISGMKG.

Helical transmembrane passes span 6–26 (LIAM…GVLA), 30–50 (IMFQ…GFVA), and 63–83 (MFIL…ALFL).

It belongs to the complex I subunit 4L family. As to quaternary structure, NDH-1 is composed of 14 different subunits. Subunits NuoA, H, J, K, L, M, N constitute the membrane sector of the complex.

Its subcellular location is the cell inner membrane. The enzyme catalyses a quinone + NADH + 5 H(+)(in) = a quinol + NAD(+) + 4 H(+)(out). In terms of biological role, NDH-1 shuttles electrons from NADH, via FMN and iron-sulfur (Fe-S) centers, to quinones in the respiratory chain. The immediate electron acceptor for the enzyme in this species is believed to be ubiquinone. Couples the redox reaction to proton translocation (for every two electrons transferred, four hydrogen ions are translocated across the cytoplasmic membrane), and thus conserves the redox energy in a proton gradient. The protein is NADH-quinone oxidoreductase subunit K of Rhodopseudomonas palustris (strain BisB5).